Here is a 547-residue protein sequence, read N- to C-terminus: CTP synthase (547 aa).

An amidoligase domain region spans residues 1-273 (MNNKKLKSKF…DHFILNHFQL (273 aa)). Serine 19 lines the CTP pocket. Serine 19 contributes to the UTP binding site. 20–25 (SLGKGI) serves as a coordination point for ATP. Residue tyrosine 60 coordinates L-glutamine. Aspartate 77 serves as a coordination point for ATP. Positions 77 and 147 each coordinate Mg(2+). CTP is bound by residues 154-156 (DIE), 194-199 (KTKPTQ), and lysine 230. Residues 194–199 (KTKPTQ) and lysine 230 each bind UTP. The Glutamine amidotransferase type-1 domain occupies 306–539 (YVILHDAYLS…VEAALLKNGK (234 aa)). Glycine 361 contributes to the L-glutamine binding site. Cysteine 388 (nucleophile; for glutamine hydrolysis) is an active-site residue. L-glutamine-binding positions include 389–392 (FGMQ), glutamate 412, and arginine 466. Residues histidine 512 and glutamate 514 contribute to the active site.

It belongs to the CTP synthase family. In terms of assembly, homotetramer.

It carries out the reaction UTP + L-glutamine + ATP + H2O = CTP + L-glutamate + ADP + phosphate + 2 H(+). The catalysed reaction is L-glutamine + H2O = L-glutamate + NH4(+). The enzyme catalyses UTP + NH4(+) + ATP = CTP + ADP + phosphate + 2 H(+). It functions in the pathway pyrimidine metabolism; CTP biosynthesis via de novo pathway; CTP from UDP: step 2/2. Its activity is regulated as follows. Allosterically activated by GTP, when glutamine is the substrate; GTP has no effect on the reaction when ammonia is the substrate. The allosteric effector GTP functions by stabilizing the protein conformation that binds the tetrahedral intermediate(s) formed during glutamine hydrolysis. Inhibited by the product CTP, via allosteric rather than competitive inhibition. Functionally, catalyzes the ATP-dependent amination of UTP to CTP with either L-glutamine or ammonia as the source of nitrogen. Regulates intracellular CTP levels through interactions with the four ribonucleotide triphosphates. This is CTP synthase from Phytoplasma australiense.